A 325-amino-acid polypeptide reads, in one-letter code: MMFGILGTAGIGVKSVIPAVQASEHEAAAIASRDEARASAVADELGIPTAYGSYEALLADDSLDAVYIPLPNGLHADWVRAAADRGLHVLCEKPLTASADETAAVFDYCEDAGVTLMEAFMYRFHPLTERAAELVASELGAVVSVTSNFSFRLPDGADDIRIDPDLAGGSVMDVGCYAVSAARLFLGTPDRVYATTTDTRDCGVDTRMSGVLEYDSGATARVESSFDTPETQYYRVQTTDGRLEANPAFNVDPTAAAELTYATDGRVVTETFDPTDSYRREVEAFARAVETGETPRVDREESVSVMRTIDAIYESAETGAAVELD.

The signal sequence occupies residues 1–22; the sequence is MMFGILGTAGIGVKSVIPAVQA.

This sequence belongs to the Gfo/Idh/MocA family. As to quaternary structure, homotetramer.

Its subcellular location is the secreted. It carries out the reaction D-xylose + NADP(+) = D-xylono-1,5-lactone + NADPH + H(+). Its function is as follows. NADP-dependent D-xylose dehydrogenase involved in the degradation of D-xylose, a major component of hemicelluloses such as xylan. Even if it shows D-xylose dehydrogenase activity, it is not essential for D-xylose degradation. This Haloferax volcanii (strain ATCC 29605 / DSM 3757 / JCM 8879 / NBRC 14742 / NCIMB 2012 / VKM B-1768 / DS2) (Halobacterium volcanii) protein is D-xylose 1-dehydrogenase (NADP(+)) 2.